We begin with the raw amino-acid sequence, 1855 residues long: Chitin synthase 5 (1855 aa).

The Myosin motor domain occupies 1-778 (MSSAPTTQQN…CWRQIVRAGD (778 aa)). Position 95–102 (95–102 (GESGTGKT)) interacts with ATP. N-linked (GlcNAc...) asparagine glycans are attached at residues Asn-221, Asn-520, and Asn-558. A disordered region spans residues 585 to 650 (AVQQASVASK…PKSADTQQGA (66 aa)). Residues 658–682 (LDNINKSLTAPNTNPYFFFCLKPND) are actin-binding. The N-linked (GlcNAc...) asparagine glycan is linked to Asn-662. Helical transmembrane passes span 887–907 (WLVL…RIIG) and 922–942 (VAIN…MVGF). One can recognise a Cytochrome b5 heme-binding domain in the interval 950–1008 (QHVFSPSELTSYDGKNSDAYVAIRGNVFDLGAFIPQHYPSIVPASALEKYAGTDATNLF). 2 N-linked (GlcNAc...) asparagine glycosylation sites follow: Asn-1037 and Asn-1061. Residues 1199-1219 (ILLAVSIMLVSVICFKFLAAL) traverse the membrane as a helical segment. Residues Asn-1422, Asn-1456, and Asn-1562 are each glycosylated (N-linked (GlcNAc...) asparagine). The next 3 membrane-spanning stretches (helical) occupy residues 1587 to 1607 (FVVF…GYIV), 1621 to 1641 (ATTA…IFIV), and 1650 to 1670 (WMII…LIAF). 2 N-linked (GlcNAc...) asparagine glycosylation sites follow: Asn-1755 and Asn-1767. A DEK-C domain is found at 1797–1852 (MPNDDAILAEIREILATADLMTVTKKSIKAELERRFGVPMDSRRQYIGSATEAILS).

In the N-terminal section; belongs to the TRAFAC class myosin-kinesin ATPase superfamily. Myosin family. This sequence in the C-terminal section; belongs to the chitin synthase family. Class V subfamily.

Its subcellular location is the apical cell membrane. The protein resides in the cell septum. It is found in the cell tip. It carries out the reaction [(1-&gt;4)-N-acetyl-beta-D-glucosaminyl](n) + UDP-N-acetyl-alpha-D-glucosamine = [(1-&gt;4)-N-acetyl-beta-D-glucosaminyl](n+1) + UDP + H(+). In terms of biological role, polymerizes chitin, a structural polymer of the cell wall and septum, by transferring the sugar moiety of UDP-GlcNAc to the non-reducing end of the growing chitin polymer. The sequence is that of Chitin synthase 5 from Zymoseptoria tritici (strain CBS 115943 / IPO323) (Speckled leaf blotch fungus).